The chain runs to 475 residues: Ribulose bisphosphate carboxylase large chain (475 aa).

The propeptide occupies Met-1–Val-2. Pro-3 is subject to N-acetylproline. Position 14 is an N6,N6,N6-trimethyllysine (Lys-14). 2 residues coordinate substrate: Asn-123 and Thr-173. Lys-175 acts as the Proton acceptor in catalysis. Lys-177 is a substrate binding site. Residues Lys-201, Asp-203, and Glu-204 each contribute to the Mg(2+) site. At Lys-201 the chain carries N6-carboxylysine. His-294 functions as the Proton acceptor in the catalytic mechanism. Positions 295, 327, and 379 each coordinate substrate.

The protein belongs to the RuBisCO large chain family. Type I subfamily. Heterohexadecamer of 8 large chains and 8 small chains. The cofactor is Mg(2+).

It localises to the plastid. Its subcellular location is the chloroplast. It carries out the reaction 2 (2R)-3-phosphoglycerate + 2 H(+) = D-ribulose 1,5-bisphosphate + CO2 + H2O. The catalysed reaction is D-ribulose 1,5-bisphosphate + O2 = 2-phosphoglycolate + (2R)-3-phosphoglycerate + 2 H(+). In terms of biological role, ruBisCO catalyzes two reactions: the carboxylation of D-ribulose 1,5-bisphosphate, the primary event in carbon dioxide fixation, as well as the oxidative fragmentation of the pentose substrate in the photorespiration process. Both reactions occur simultaneously and in competition at the same active site. The sequence is that of Ribulose bisphosphate carboxylase large chain from Chlamydomonas moewusii (Chlamydomonas eugametos).